Reading from the N-terminus, the 576-residue chain is Chaperonin CPN60-2, mitochondrial (576 aa).

The N-terminal 34 residues, 1–34, are a transit peptide targeting the mitochondrion; sequence MYRAAASLASKARQAGSSSAARQVGSRLAWSRNY.

It belongs to the chaperonin (HSP60) family.

Its subcellular location is the mitochondrion. Implicated in mitochondrial protein import and macromolecular assembly. May facilitate the correct folding of imported proteins. May also prevent misfolding and promote the refolding and proper assembly of unfolded polypeptides generated under stress conditions in the mitochondrial matrix. This Zea mays (Maize) protein is Chaperonin CPN60-2, mitochondrial (CPN60II).